Reading from the N-terminus, the 443-residue chain is ATP-dependent protease ATPase subunit HslU (443 aa).

ATP contacts are provided by residues Val-18, 60–65, Asp-255, Glu-321, and Arg-393; that span reads GVGKTE.

This sequence belongs to the ClpX chaperone family. HslU subfamily. In terms of assembly, a double ring-shaped homohexamer of HslV is capped on each side by a ring-shaped HslU homohexamer. The assembly of the HslU/HslV complex is dependent on binding of ATP.

The protein resides in the cytoplasm. In terms of biological role, ATPase subunit of a proteasome-like degradation complex; this subunit has chaperone activity. The binding of ATP and its subsequent hydrolysis by HslU are essential for unfolding of protein substrates subsequently hydrolyzed by HslV. HslU recognizes the N-terminal part of its protein substrates and unfolds these before they are guided to HslV for hydrolysis. The chain is ATP-dependent protease ATPase subunit HslU from Colwellia psychrerythraea (strain 34H / ATCC BAA-681) (Vibrio psychroerythus).